Here is a 180-residue protein sequence, read N- to C-terminus: NADH-ubiquinone oxidoreductase chain 5 (180 aa).

The chain crosses the membrane as a helical span at residues 131–148 (VYHYAFAMLLGSTPFVTF).

This sequence belongs to the complex I subunit 5 family.

The protein resides in the mitochondrion inner membrane. It carries out the reaction a ubiquinone + NADH + 5 H(+)(in) = a ubiquinol + NAD(+) + 4 H(+)(out). Its function is as follows. Core subunit of the mitochondrial membrane respiratory chain NADH dehydrogenase (Complex I) that is believed to belong to the minimal assembly required for catalysis. Complex I functions in the transfer of electrons from NADH to the respiratory chain. The immediate electron acceptor for the enzyme is believed to be ubiquinone. The sequence is that of NADH-ubiquinone oxidoreductase chain 5 (ND5) from Zea mays (Maize).